Reading from the N-terminus, the 196-residue chain is Pyridoxal 5'-phosphate synthase subunit PdxT (196 aa).

Position 47–49 (47–49 (GES)) interacts with L-glutamine. Cys79 serves as the catalytic Nucleophile. L-glutamine is bound by residues Arg106 and 134–135 (IR). Residues His170 and Glu172 each act as charge relay system in the active site.

The protein belongs to the glutaminase PdxT/SNO family. In terms of assembly, in the presence of PdxS, forms a dodecamer of heterodimers. Only shows activity in the heterodimer.

It catalyses the reaction aldehydo-D-ribose 5-phosphate + D-glyceraldehyde 3-phosphate + L-glutamine = pyridoxal 5'-phosphate + L-glutamate + phosphate + 3 H2O + H(+). The enzyme catalyses L-glutamine + H2O = L-glutamate + NH4(+). Its pathway is cofactor biosynthesis; pyridoxal 5'-phosphate biosynthesis. In terms of biological role, catalyzes the hydrolysis of glutamine to glutamate and ammonia as part of the biosynthesis of pyridoxal 5'-phosphate. The resulting ammonia molecule is channeled to the active site of PdxS. This Bacillus cereus (strain B4264) protein is Pyridoxal 5'-phosphate synthase subunit PdxT.